We begin with the raw amino-acid sequence, 137 residues long: uncharacterized protein (137 aa).

It belongs to the ycf72 family.

It is found in the plastid. The protein localises to the chloroplast. This is an uncharacterized protein from Zea mays (Maize).